The following is a 689-amino-acid chain: Glycine--tRNA ligase beta subunit (689 aa).

The protein belongs to the class-II aminoacyl-tRNA synthetase family. As to quaternary structure, tetramer of two alpha and two beta subunits.

It localises to the cytoplasm. It carries out the reaction tRNA(Gly) + glycine + ATP = glycyl-tRNA(Gly) + AMP + diphosphate. This Shewanella sediminis (strain HAW-EB3) protein is Glycine--tRNA ligase beta subunit.